We begin with the raw amino-acid sequence, 364 residues long: tRNA 2-selenouridine synthase (364 aa).

Positions L14–I137 constitute a Rhodanese domain. C97 (S-selanylcysteine intermediate) is an active-site residue.

The protein belongs to the SelU family. As to quaternary structure, monomer.

The enzyme catalyses 5-methylaminomethyl-2-thiouridine(34) in tRNA + selenophosphate + (2E)-geranyl diphosphate + H2O + H(+) = 5-methylaminomethyl-2-selenouridine(34) in tRNA + (2E)-thiogeraniol + phosphate + diphosphate. The catalysed reaction is 5-methylaminomethyl-2-thiouridine(34) in tRNA + (2E)-geranyl diphosphate = 5-methylaminomethyl-S-(2E)-geranyl-thiouridine(34) in tRNA + diphosphate. It catalyses the reaction 5-methylaminomethyl-S-(2E)-geranyl-thiouridine(34) in tRNA + selenophosphate + H(+) = 5-methylaminomethyl-2-(Se-phospho)selenouridine(34) in tRNA + (2E)-thiogeraniol. It carries out the reaction 5-methylaminomethyl-2-(Se-phospho)selenouridine(34) in tRNA + H2O = 5-methylaminomethyl-2-selenouridine(34) in tRNA + phosphate. In terms of biological role, involved in the post-transcriptional modification of the uridine at the wobble position (U34) of tRNA(Lys), tRNA(Glu) and tRNA(Gln). Catalyzes the conversion of 2-thiouridine (S2U-RNA) to 2-selenouridine (Se2U-RNA). Acts in a two-step process involving geranylation of 2-thiouridine (S2U) to S-geranyl-2-thiouridine (geS2U) and subsequent selenation of the latter derivative to 2-selenouridine (Se2U) in the tRNA chain. The sequence is that of tRNA 2-selenouridine synthase from Shigella boydii serotype 18 (strain CDC 3083-94 / BS512).